Reading from the N-terminus, the 534-residue chain is uncharacterized protein (534 aa).

A signal peptide spans 1 to 22 (MGLRLLFSLICVFCISNIFTQA). Residue Asn31 is glycosylated (N-linked (GlcNAc...) asparagine). Disordered regions lie at residues 70–145 (PTYY…SSVS) and 176–418 (SSLS…SSAP). An N-linked (GlcNAc...) asparagine glycan is attached at Asn426.

It is found in the endoplasmic reticulum. The protein localises to the cell membrane. This is an uncharacterized protein from Schizosaccharomyces pombe (strain 972 / ATCC 24843) (Fission yeast).